The chain runs to 116 residues: Large ribosomal subunit protein uL18 (116 aa).

The protein belongs to the universal ribosomal protein uL18 family. Part of the 50S ribosomal subunit; part of the 5S rRNA/L5/L18/L25 subcomplex. Contacts the 5S and 23S rRNAs.

In terms of biological role, this is one of the proteins that bind and probably mediate the attachment of the 5S RNA into the large ribosomal subunit, where it forms part of the central protuberance. This Alcanivorax borkumensis (strain ATCC 700651 / DSM 11573 / NCIMB 13689 / SK2) protein is Large ribosomal subunit protein uL18.